We begin with the raw amino-acid sequence, 397 residues long: Phosphoglycerate kinase (397 aa).

Substrate is bound by residues 25 to 27 (DLN), R41, 64 to 67 (HLGR), R118, and R151. ATP contacts are provided by residues K202, E324, and 350–353 (GGDT).

It belongs to the phosphoglycerate kinase family. Monomer.

It localises to the cytoplasm. It carries out the reaction (2R)-3-phosphoglycerate + ATP = (2R)-3-phospho-glyceroyl phosphate + ADP. It functions in the pathway carbohydrate degradation; glycolysis; pyruvate from D-glyceraldehyde 3-phosphate: step 2/5. The polypeptide is Phosphoglycerate kinase (Paracidovorax citrulli (strain AAC00-1) (Acidovorax citrulli)).